The chain runs to 142 residues: Large ribosomal subunit protein uL11 (142 aa).

The protein belongs to the universal ribosomal protein uL11 family. As to quaternary structure, part of the ribosomal stalk of the 50S ribosomal subunit. Interacts with L10 and the large rRNA to form the base of the stalk. L10 forms an elongated spine to which L12 dimers bind in a sequential fashion forming a multimeric L10(L12)X complex. In terms of processing, one or more lysine residues are methylated.

Functionally, forms part of the ribosomal stalk which helps the ribosome interact with GTP-bound translation factors. The polypeptide is Large ribosomal subunit protein uL11 (Leptospira interrogans serogroup Icterohaemorrhagiae serovar copenhageni (strain Fiocruz L1-130)).